Consider the following 369-residue polypeptide: Gibberellin 3-beta-dioxygenase 2-3 (369 aa).

The Fe2OG dioxygenase domain occupies 205 to 306 (MTATMHLNWY…RISLGYFLGP (102 aa)). Residues His229, Asp231, and His287 each coordinate Fe cation. Arg297 is a catalytic residue.

This sequence belongs to the iron/ascorbate-dependent oxidoreductase family. GA3OX subfamily. Requires L-ascorbate as cofactor. It depends on Fe cation as a cofactor.

It catalyses the reaction gibberellin A20 + 2-oxoglutarate + O2 = gibberellin A1 + succinate + CO2. Converts the inactive gibberellin precursors GA9 and GA20 in the bioactives gibberellins GA4 and GA1. In Triticum aestivum (Wheat), this protein is Gibberellin 3-beta-dioxygenase 2-3 (GA3ox2-3).